The following is a 242-amino-acid chain: Pyridoxine 5'-phosphate synthase (242 aa).

Asparagine 6 is a 3-amino-2-oxopropyl phosphate binding site. 8–9 (DH) provides a ligand contact to 1-deoxy-D-xylulose 5-phosphate. Arginine 17 provides a ligand contact to 3-amino-2-oxopropyl phosphate. Histidine 42 (proton acceptor) is an active-site residue. Residues arginine 44 and histidine 49 each coordinate 1-deoxy-D-xylulose 5-phosphate. Glutamate 69 acts as the Proton acceptor in catalysis. Threonine 99 lines the 1-deoxy-D-xylulose 5-phosphate pocket. Histidine 190 (proton donor) is an active-site residue. 3-amino-2-oxopropyl phosphate contacts are provided by residues glycine 191 and 212 to 213 (GH).

This sequence belongs to the PNP synthase family. As to quaternary structure, homooctamer; tetramer of dimers.

The protein resides in the cytoplasm. The enzyme catalyses 3-amino-2-oxopropyl phosphate + 1-deoxy-D-xylulose 5-phosphate = pyridoxine 5'-phosphate + phosphate + 2 H2O + H(+). It participates in cofactor biosynthesis; pyridoxine 5'-phosphate biosynthesis; pyridoxine 5'-phosphate from D-erythrose 4-phosphate: step 5/5. Functionally, catalyzes the complicated ring closure reaction between the two acyclic compounds 1-deoxy-D-xylulose-5-phosphate (DXP) and 3-amino-2-oxopropyl phosphate (1-amino-acetone-3-phosphate or AAP) to form pyridoxine 5'-phosphate (PNP) and inorganic phosphate. The protein is Pyridoxine 5'-phosphate synthase of Neisseria meningitidis serogroup A / serotype 4A (strain DSM 15465 / Z2491).